Consider the following 211-residue polypeptide: Uracil phosphoribosyltransferase (211 aa).

5-phospho-alpha-D-ribose 1-diphosphate contacts are provided by residues R77, R102, and 129–137 (DPMLATGGS). Uracil contacts are provided by residues I192 and 197–199 (GDA). D198 contributes to the 5-phospho-alpha-D-ribose 1-diphosphate binding site.

The protein belongs to the UPRTase family. The cofactor is Mg(2+).

It catalyses the reaction UMP + diphosphate = 5-phospho-alpha-D-ribose 1-diphosphate + uracil. It functions in the pathway pyrimidine metabolism; UMP biosynthesis via salvage pathway; UMP from uracil: step 1/1. With respect to regulation, allosterically activated by GTP. Functionally, catalyzes the conversion of uracil and 5-phospho-alpha-D-ribose 1-diphosphate (PRPP) to UMP and diphosphate. In Corynebacterium glutamicum (strain R), this protein is Uracil phosphoribosyltransferase.